Reading from the N-terminus, the 214-residue chain is Large ribosomal subunit protein uL2my, C-terminal part (214 aa).

A mitochondrion-targeting transit peptide spans 1-30 (MSGLVALCRARASASSSLFNSVIRPAFRNF). The interval 157–214 (VAMNPCDHPHGGGEGKSKSSGSRGRTSVSPWGKPCKGGYKSASVKKKKKRLAEAAAKM) is disordered. Residues 163-173 (DHPHGGGEGKS) are compositionally biased toward basic and acidic residues. Over residues 174–185 (KSSGSRGRTSVS) the composition is skewed to low complexity.

Belongs to the universal ribosomal protein uL2 family. In terms of assembly, component of the mitochondrial ribosome large subunit.

The protein localises to the mitochondrion. The protein is Large ribosomal subunit protein uL2my, C-terminal part of Arabidopsis thaliana (Mouse-ear cress).